We begin with the raw amino-acid sequence, 159 residues long: Keratin-associated protein 9-3 (159 aa).

A run of 16 repeats spans residues 8-12 (CCQPT), 13-17 (CCRTT), 32-36 (CCQPS), 37-41 (CCVSS), 46-50 (CCHPT), 51-55 (CCQNT), 56-60 (CCRTT), 61-65 (CCQPI), 70-74 (CCQPS), 75-79 (CCSTP), 80-84 (CCQPT), 85-89 (CCGSS), 129-133 (CCRPA), 134-138 (CCETT), 139-143 (CCRTT), and 153-157 (CCQPS). Residues 8-157 (CCQPTCCRTT…TCVYSCCQPS (150 aa)) are 16 X 5 AA repeats of C-C-[RQVSHE]-[SPTN]-[TASPI].

It belongs to the KRTAP type 9 family. As to quaternary structure, interacts with hair keratins.

In terms of biological role, in the hair cortex, hair keratin intermediate filaments are embedded in an interfilamentous matrix, consisting of hair keratin-associated proteins (KRTAP), which are essential for the formation of a rigid and resistant hair shaft through their extensive disulfide bond cross-linking with abundant cysteine residues of hair keratins. The matrix proteins include the high-sulfur and high-glycine-tyrosine keratins. This chain is Keratin-associated protein 9-3 (KRTAP9-3), found in Homo sapiens (Human).